We begin with the raw amino-acid sequence, 117 residues long: PWLVGWWDQFKRMLNRELTHLSEMSRSGNQVSEYISTTFLDKQNEVEIPSPTMKDREPQEAPRQRPCQQLPPPVPHLQPMSQITGVKRLSHNSGLNNASIPRFGVKTDQEELLAQEL.

The tract at residues Lys42–Pro79 is disordered. Positions Met53–Arg63 are enriched in basic and acidic residues. The tract at residues Gln78 to Leu117 is catalytic.

This sequence belongs to the cyclic nucleotide phosphodiesterase family. PDE4 subfamily. In terms of assembly, interacts with LYN (via SH3 domain). Interacts with ARRB2. Zn(2+) is required as a cofactor. Requires Mg(2+) as cofactor. The cofactor is Mn(2+). In terms of processing, proteolytically cleaved by CASP3.

Its subcellular location is the cytoplasm. The protein resides in the cytosol. It is found in the membrane. It carries out the reaction 3',5'-cyclic AMP + H2O = AMP + H(+). It functions in the pathway purine metabolism; 3',5'-cyclic AMP degradation; AMP from 3',5'-cyclic AMP: step 1/1. Hydrolyzes the second messenger 3',5'-cyclic AMP (cAMP), which is a key regulator of many important physiological processes. This is 3',5'-cyclic-AMP phosphodiesterase 4A (PDE4A) from Cavia porcellus (Guinea pig).